The sequence spans 1148 residues: Trafficking protein particle complex subunit 9 (1148 aa).

Residues S566 and S953 each carry the phosphoserine modification.

It belongs to the NIBP family. Component of the multisubunit TRAPP (transport protein particle) complex, which includes at least TRAPPC2, TRAPPC2L, TRAPPC3, TRAPPC3L, TRAPPC4, TRAPPC5, TRAPPC8, TRAPPC9, TRAPPC10, TRAPPC11 and TRAPPC12. Directly interacts with IKBKB and MAP3K14. In terms of tissue distribution, expressed in neurons of the pyramidal layer of the cortex, in spinal cord motor neurons and white matter neurons (at protein level).

It localises to the golgi apparatus. The protein resides in the cis-Golgi network. Its subcellular location is the endoplasmic reticulum. It is found in the cytoplasm. In terms of biological role, functions as an activator of NF-kappa-B through increased phosphorylation of the IKK complex. May function in neuronal cells differentiation. May play a role in vesicular transport from endoplasmic reticulum to Golgi. This is Trafficking protein particle complex subunit 9 (Trappc9) from Mus musculus (Mouse).